The sequence spans 544 residues: MAKRIIYNEQARRALERGIDILAESVAVTLGPKGRNVVLEKKFGAPQIINDGVTIAKEIELEDHIENTGVALIRQAASKTNDAAGDGTTTATVLAHAMVKAGLRNVAAGANAITLKKGIDKATEFLVGKIEENSKPISDSTAIAQCGTIAAGNDEEVGEMIANAMDKVGKEGVISLEEGKSMTTELEVTEGMRFDKGYISPYFATDTERMEAVLDEPYILLTDKKIALVQDLVPVLEQIAKTGKPLVIIAEDIEKEALATLVVNRLRGVLNVAAVKAPGFGDRRKAMLEDMAVLTNGQLITEDAGLKLENATLEMLGTGRRITINKETTTIVAEGNEKAVNSRCDQIKKQMEETDSSYDKEKLQERLAKLAGGVAVIKVGAATETEMKDKKLRLEDAINATKAAVEEGIVPGGGTTLAHLAPILKEWADATLSGEELIGANIVEASLTAPLMRIAENAGSNGAVIAENVKSKPFNDGFNAATGEYVDMSSAGIVDPAKVTRSGLQNAASIAGMVLTTECIVADMPEKKESAPAGAPGMGGDFDY.

ATP is bound by residues 29 to 32 (TLGP), 86 to 90 (DGTTT), Gly-413, 479 to 481 (NAA), and Asp-495.

Belongs to the chaperonin (HSP60) family. In terms of assembly, forms a cylinder of 14 subunits composed of two heptameric rings stacked back-to-back. Interacts with the co-chaperonin GroES.

The protein resides in the cytoplasm. It catalyses the reaction ATP + H2O + a folded polypeptide = ADP + phosphate + an unfolded polypeptide.. In terms of biological role, together with its co-chaperonin GroES, plays an essential role in assisting protein folding. The GroEL-GroES system forms a nano-cage that allows encapsulation of the non-native substrate proteins and provides a physical environment optimized to promote and accelerate protein folding. In Prochlorococcus marinus (strain MIT 9515), this protein is Chaperonin GroEL 2.